A 154-amino-acid polypeptide reads, in one-letter code: Deoxyuridine 5'-triphosphate nucleotidohydrolase (154 aa).

Substrate is bound by residues 64-66 (RSG), Asn77, 81-83 (TVD), and Lys91.

Belongs to the dUTPase family. In terms of assembly, homotrimer. The cofactor is Mg(2+).

It catalyses the reaction dUTP + H2O = dUMP + diphosphate + H(+). It functions in the pathway pyrimidine metabolism; dUMP biosynthesis; dUMP from dCTP (dUTP route): step 2/2. Its function is as follows. This enzyme is involved in nucleotide metabolism: it produces dUMP, the immediate precursor of thymidine nucleotides and it decreases the intracellular concentration of dUTP so that uracil cannot be incorporated into DNA. This Mycobacterium leprae (strain Br4923) protein is Deoxyuridine 5'-triphosphate nucleotidohydrolase.